The following is a 151-amino-acid chain: Deoxyuridine 5'-triphosphate nucleotidohydrolase (151 aa).

Substrate is bound by residues 70–72, Asn83, 87–89, and Met97; these read RSG and LID.

This sequence belongs to the dUTPase family. The cofactor is Mg(2+).

The catalysed reaction is dUTP + H2O = dUMP + diphosphate + H(+). The protein operates within pyrimidine metabolism; dUMP biosynthesis; dUMP from dCTP (dUTP route): step 2/2. Its function is as follows. This enzyme is involved in nucleotide metabolism: it produces dUMP, the immediate precursor of thymidine nucleotides and it decreases the intracellular concentration of dUTP so that uracil cannot be incorporated into DNA. The protein is Deoxyuridine 5'-triphosphate nucleotidohydrolase of Azotobacter vinelandii (strain DJ / ATCC BAA-1303).